The following is a 155-amino-acid chain: Small ribosomal subunit protein uS7cz/uS7cy (155 aa).

The protein belongs to the universal ribosomal protein uS7 family. As to quaternary structure, part of the 30S ribosomal subunit.

Its subcellular location is the plastid. One of the primary rRNA binding proteins, it binds directly to 16S rRNA where it nucleates assembly of the head domain of the 30S subunit. This chain is Small ribosomal subunit protein uS7cz/uS7cy (rps7-A), found in Cuscuta exaltata (Tall dodder).